Reading from the N-terminus, the 152-residue chain is Transcriptional regulator MraZ (152 aa).

SpoVT-AbrB domains lie at 5–52 (ASAI…PIHE) and 81–124 (AHEV…DEQS).

The protein belongs to the MraZ family. In terms of assembly, forms oligomers.

It is found in the cytoplasm. It localises to the nucleoid. The chain is Transcriptional regulator MraZ from Shewanella baltica (strain OS223).